Here is a 330-residue protein sequence, read N- to C-terminus: Short chain dehydrogenase yanD (330 aa).

NADP(+)-binding residues include lysine 57, aspartate 86, asparagine 113, tyrosine 204, and lysine 208. The active-site Proton donor is tyrosine 204. Lysine 208 functions as the Lowers pKa of active site Tyr in the catalytic mechanism.

It belongs to the short-chain dehydrogenases/reductases (SDR) family.

The protein operates within secondary metabolite biosynthesis; terpenoid biosynthesis. Short chain dehydrogenase; part of the gene cluster that mediates the biosynthesis of yanuthone D, a fungal isoprenoid epoxycyclohexenone that acts as an antibiotic against fungi and bacteria. The first step of the pathway is the synthesis of 6-methylsalicylic acid (6-MSA) by the polyketide synthase yanA. 6-MSA is then converted to m-cresol by the decarboxylase yanB. The cytochrome P450 monooxygenase yanC then catalyzes the oxidation of m-cresol to toluquinol. Epoxidation of toluquinol is then performed by the short chain dehydrogenase yanD, with the help of yanE, and a further prenylation by yanG leads to 7-deacetoxyyanuthone A. The next step is the hydroxylation of C-22 of 7-deacetoxyyanuthone A by the cytochrome P450 monooxygenase yanH to yield 22-deacetylyanuthone A. O-Mevalon transferase yanI then attaches mevalon to the hydroxyl group of 22-deacetylyanuthone A to produce yanuthone E. Finally, the FAD-dependent monooxygenase yanF oxidizes the hydroxyl group at C15 of yanuthone E to form yanuthone D. Furthermore, several branching points in the pathway lead to the production of yanuthones F and G from 7-deacetoxyyanuthone A; yanuthones H and I from 22-deacetylyanuthone A; and yanuthone J from yanuthone E. YanD is also involved in the synthesis of yanuthone X1 which does not have 6-methylsalicylic acid (6-MSA) as precursor. This chain is Short chain dehydrogenase yanD, found in Aspergillus niger (strain ATCC 1015 / CBS 113.46 / FGSC A1144 / LSHB Ac4 / NCTC 3858a / NRRL 328 / USDA 3528.7).